Here is a 176-residue protein sequence, read N- to C-terminus: Xanthine-guanine phosphoribosyltransferase (176 aa).

5-phospho-alpha-D-ribose 1-diphosphate-binding positions include 51-52, Arg-88, and 111-119; these read RG and DDLVDSGKT. Arg-88 contributes to the GMP binding site. Asp-112 serves as a coordination point for Mg(2+). Guanine-binding residues include Asp-115 and Ile-158. Xanthine-binding residues include Asp-115 and Ile-158. GMP contacts are provided by residues 115 to 119 and 157 to 158; these read DSGKT and WI.

The protein belongs to the purine/pyrimidine phosphoribosyltransferase family. XGPT subfamily. Homotetramer. It depends on Mg(2+) as a cofactor.

It is found in the cell inner membrane. It carries out the reaction GMP + diphosphate = guanine + 5-phospho-alpha-D-ribose 1-diphosphate. The enzyme catalyses XMP + diphosphate = xanthine + 5-phospho-alpha-D-ribose 1-diphosphate. The catalysed reaction is IMP + diphosphate = hypoxanthine + 5-phospho-alpha-D-ribose 1-diphosphate. The protein operates within purine metabolism; GMP biosynthesis via salvage pathway; GMP from guanine: step 1/1. Its pathway is purine metabolism; XMP biosynthesis via salvage pathway; XMP from xanthine: step 1/1. Purine salvage pathway enzyme that catalyzes the transfer of the ribosyl-5-phosphate group from 5-phospho-alpha-D-ribose 1-diphosphate (PRPP) to the N9 position of the 6-oxopurines guanine and xanthine to form the corresponding ribonucleotides GMP (guanosine 5'-monophosphate) and XMP (xanthosine 5'-monophosphate), with the release of PPi. To a lesser extent, also acts on hypoxanthine. The polypeptide is Xanthine-guanine phosphoribosyltransferase (Ruegeria sp. (strain TM1040) (Silicibacter sp.)).